A 155-amino-acid polypeptide reads, in one-letter code: Ribosomal RNA large subunit methyltransferase H (155 aa).

S-adenosyl-L-methionine contacts are provided by residues leucine 72, glycine 103, and 122-127; that span reads LSTMTL.

The protein belongs to the RNA methyltransferase RlmH family. As to quaternary structure, homodimer.

It localises to the cytoplasm. It catalyses the reaction pseudouridine(1915) in 23S rRNA + S-adenosyl-L-methionine = N(3)-methylpseudouridine(1915) in 23S rRNA + S-adenosyl-L-homocysteine + H(+). Functionally, specifically methylates the pseudouridine at position 1915 (m3Psi1915) in 23S rRNA. This Nitrosomonas eutropha (strain DSM 101675 / C91 / Nm57) protein is Ribosomal RNA large subunit methyltransferase H.